The primary structure comprises 311 residues: Methionyl-tRNA formyltransferase (311 aa).

Residue 108–111 (SILP) coordinates (6S)-5,6,7,8-tetrahydrofolate.

The protein belongs to the Fmt family.

It carries out the reaction L-methionyl-tRNA(fMet) + (6R)-10-formyltetrahydrofolate = N-formyl-L-methionyl-tRNA(fMet) + (6S)-5,6,7,8-tetrahydrofolate + H(+). In terms of biological role, attaches a formyl group to the free amino group of methionyl-tRNA(fMet). The formyl group appears to play a dual role in the initiator identity of N-formylmethionyl-tRNA by promoting its recognition by IF2 and preventing the misappropriation of this tRNA by the elongation apparatus. The sequence is that of Methionyl-tRNA formyltransferase from Sorangium cellulosum (strain So ce56) (Polyangium cellulosum (strain So ce56)).